The sequence spans 369 residues: UPF0283 membrane protein RPA1583 (369 aa).

The tract at residues 1-61 is disordered; it reads MTERVPPRRP…APPPPPPRAR (61 aa). Residues 34 to 51 are compositionally biased toward low complexity; sequence AKPSAKADARPAASAAGA. Transmembrane regions (helical) follow at residues 90-110, 124-144, and 239-259; these read WGTV…WLWI, LGTI…IIIG, and VSLV…VAIA.

It belongs to the UPF0283 family.

Its subcellular location is the cell inner membrane. The polypeptide is UPF0283 membrane protein RPA1583 (Rhodopseudomonas palustris (strain ATCC BAA-98 / CGA009)).